The sequence spans 157 residues: Ubiquitin-like protein 4A (157 aa).

In terms of domain architecture, Ubiquitin-like spans 1 to 76 (MQLTVKALQG…LNLVVKPLEK (76 aa)). Lys48 is covalently cross-linked (Glycyl lysine isopeptide (Lys-Gly) (interchain with G-Cter in ubiquitin)). Ser90 carries the post-translational modification Phosphoserine. The required and sufficient for interaction with BAG6 stretch occupies residues 96-138 (WQLISKVLARHFSAADASRVLEQLQRDYERSLSRLTLDDIERL).

As to quaternary structure, component of the BAG6/BAT3 complex, at least composed of BAG6, UBL4A and GET4/TRC35. Interacts with BAG6; the interaction is direct and required for UBL4A protein stability. Interacts with USP13; may be indirect via BAG6. In terms of processing, polyubiquitinated. Ubiquitination by AMFR and deubiquitination by USP13 may regulate the interaction between the BAG6/BAT3 complex and SGTA and therefore may regulate client proteins fate.

Its subcellular location is the cytoplasm. The protein resides in the cytosol. It localises to the nucleus. Functionally, as part of a cytosolic protein quality control complex, the BAG6/BAT3 complex, maintains misfolded and hydrophobic patches-containing proteins in a soluble state and participates in their proper delivery to the endoplasmic reticulum or alternatively can promote their sorting to the proteasome where they undergo degradation. The BAG6/BAT3 complex is involved in the post-translational delivery of tail-anchored/type II transmembrane proteins to the endoplasmic reticulum membrane. Recruited to ribosomes, it interacts with the transmembrane region of newly synthesized tail-anchored proteins and together with SGTA and ASNA1 mediates their delivery to the endoplasmic reticulum. Client proteins that cannot be properly delivered to the endoplasmic reticulum are ubiquitinated and sorted to the proteasome. Similarly, the BAG6/BAT3 complex also functions as a sorting platform for proteins of the secretory pathway that are mislocalized to the cytosol either delivering them to the proteasome for degradation or to the endoplasmic reticulum. The BAG6/BAT3 complex also plays a role in the endoplasmic reticulum-associated degradation (ERAD), a quality control mechanism that eliminates unwanted proteins of the endoplasmic reticulum through their retrotranslocation to the cytosol and their targeting to the proteasome. It maintains these retrotranslocated proteins in an unfolded yet soluble state condition in the cytosol to ensure their proper delivery to the proteasome. In Homo sapiens (Human), this protein is Ubiquitin-like protein 4A.